The sequence spans 207 residues: Small ribosomal subunit protein uS4A (207 aa).

The S4 RNA-binding domain occupies 98 to 163 (TRLDNLVYRL…SPKFKELKEN (66 aa)).

Belongs to the universal ribosomal protein uS4 family. In terms of assembly, part of the 30S ribosomal subunit. Contacts protein S5. The interaction surface between S4 and S5 is involved in control of translational fidelity.

Functionally, one of the primary rRNA binding proteins, it binds directly to 16S rRNA where it nucleates assembly of the body of the 30S subunit. With S5 and S12 plays an important role in translational accuracy. The chain is Small ribosomal subunit protein uS4A from Alkaliphilus metalliredigens (strain QYMF).